The following is a 73-amino-acid chain: IGMVVECKDGYLMGPDGCKLDCLMRKGTFCAETCSLRKGKDGYCYAWLACYCYNMPDSVKVWERATNRCGKGK.

The N-terminal stretch at 1 to 7 is a signal peptide; it reads IGMVVEC. The LCN-type CS-alpha/beta domain maps to 8-70; that stretch reads KDGYLMGPDG…VWERATNRCG (63 aa). Intrachain disulfides connect Cys18–Cys69, Cys22–Cys44, Cys30–Cys50, and Cys34–Cys52. Residue Lys71 is modified to Lysine amide.

The protein belongs to the long (4 C-C) scorpion toxin superfamily. Sodium channel inhibitor family. Beta subfamily. In terms of tissue distribution, expressed by the venom gland.

The protein localises to the secreted. In terms of biological role, beta toxins bind voltage-independently at site-4 of sodium channels (Nav) and shift the voltage of activation toward more negative potentials thereby affecting sodium channel activation and promoting spontaneous and repetitive firing. The chain is Toxin Td3 from Tityus discrepans (Venezuelan scorpion).